Here is a 161-residue protein sequence, read N- to C-terminus: Nucleotide-binding protein Swoo_3646 (161 aa).

Belongs to the YajQ family.

In terms of biological role, nucleotide-binding protein. This Shewanella woodyi (strain ATCC 51908 / MS32) protein is Nucleotide-binding protein Swoo_3646.